The sequence spans 431 residues: uncharacterized protein (431 aa).

Disordered regions lie at residues 31–55 (VPAS…QAGV), 257–291 (QNGG…PKQD), and 365–431 (FQSP…HRKA). A compositionally biased stretch (polar residues) spans 42-55 (VSASQPNGAHQAGV). A compositionally biased stretch (basic and acidic residues) spans 412–425 (VEYRRGRSLRESRE).

This is an uncharacterized protein from Arabidopsis thaliana (Mouse-ear cress).